The sequence spans 379 residues: Multicilin (379 aa).

The tract at residues 1–129 (MQACEGSAAG…AMDDLIADSS (129 aa)) is necessary and sufficient for its degradation during the cell cycle. Disordered stretches follow at residues 26 to 71 (SRRT…APLP) and 88 to 107 (LGTE…PSLQ). Positions 92–107 (ASPSGDSSASQNPSLQ) are enriched in polar residues. The interval 130 to 379 (SLMSPPLTNS…GGYKFRWVPS (250 aa)) is necessary and sufficient for proper nuclear localization. Residues 171 to 241 (PPPTEQYWKE…SVLDKLMITQ (71 aa)) form a necessary and sufficient for interaction with GMNN and sufficient for homodimerization region. The stretch at 175-223 (EQYWKEVADQNQRALGTALIENNQLHVTLTQKQEEIASLRERNVQLKEL) forms a coiled coil. Residues 291 to 309 (NRDPKRPRLQPEPDSKDCS) are compositionally biased toward basic and acidic residues. The disordered stretch occupies residues 291-312 (NRDPKRPRLQPEPDSKDCSSRN).

Belongs to the geminin family. In terms of assembly, heterodimer (via coiled-coil domain) with GMNN (via coiled-coil domain); targets GMNN to the nucleus. Can form homodimers (in vitro, via coiled-coil domain), but these are much less stable than the heterodimer formed with GMNN.

It localises to the nucleus. In terms of biological role, transcription regulator specifically required for multiciliate cell differentiation. Acts in a multiprotein complex containing E2F4 and E2F5 that binds and activates genes required for centriole biogenesis. Required for the deuterosome-mediated acentriolar pathway. Plays a role in mitotic cell cycle progression by promoting cell cycle exit. Modulates GMNN activity by reducing its affinity for CDT1. This Mus musculus (Mouse) protein is Multicilin (Mcidas).